The chain runs to 207 residues: ATP-dependent Clp protease proteolytic subunit (207 aa).

Residue Ser111 is the Nucleophile of the active site. Residue His136 is part of the active site.

The protein belongs to the peptidase S14 family. As to quaternary structure, fourteen ClpP subunits assemble into 2 heptameric rings which stack back to back to give a disk-like structure with a central cavity, resembling the structure of eukaryotic proteasomes.

Its subcellular location is the cytoplasm. It carries out the reaction Hydrolysis of proteins to small peptides in the presence of ATP and magnesium. alpha-casein is the usual test substrate. In the absence of ATP, only oligopeptides shorter than five residues are hydrolyzed (such as succinyl-Leu-Tyr-|-NHMec, and Leu-Tyr-Leu-|-Tyr-Trp, in which cleavage of the -Tyr-|-Leu- and -Tyr-|-Trp bonds also occurs).. Its function is as follows. Cleaves peptides in various proteins in a process that requires ATP hydrolysis. Has a chymotrypsin-like activity. Plays a major role in the degradation of misfolded proteins. The sequence is that of ATP-dependent Clp protease proteolytic subunit from Aeromonas salmonicida (strain A449).